Reading from the N-terminus, the 855-residue chain is Inactive rhomboid protein 1 (855 aa).

The disordered stretch occupies residues 1-36 (MSEARRDSTSSLQRKKPPWLKLDIPSAVPPTAEEPS). At 1–411 (MSEARRDSTS…HRPFFTYWLT (411 aa)) the chain is on the cytoplasmic side. Phosphoserine is present on residues Ser76 and Ser176. Thr180 and Thr183 each carry phosphothreonine. Ser390 carries the phosphoserine modification. Residues 412–432 (FVHSLVTILAVCIYGIAPVGF) traverse the membrane as a helical segment. The Lumenal segment spans residues 433-655 (SQHETVDSVL…NPEVPDQFYR (223 aa)). N-linked (GlcNAc...) asparagine glycosylation is present at Asn583. A helical transmembrane segment spans residues 656–676 (LWLSLFLHAGILHCLVSICFQ). Residues 677–691 (MTVLRDLEKLAGWHR) are Cytoplasmic-facing. A helical transmembrane segment spans residues 692–712 (IAIIYLLSGVTGNLASAIFLP). Residues 713-714 (YR) lie on the Lumenal side of the membrane. Residues 715-735 (AEVGPAGSQFGILACLFVELF) form a helical membrane-spanning segment. The Cytoplasmic portion of the chain corresponds to 736–746 (QSWQILARPWR). Residues 747–767 (AFFKLLAVVLFLFTFGLLPWI) form a helical membrane-spanning segment. The Lumenal portion of the chain corresponds to 768–772 (DNFAH). The helical transmembrane segment at 773-793 (ISGFISGLFLSFAFLPYISFG) threads the bilayer. Residues 794–803 (KFDLYRKRCQ) are Cytoplasmic-facing. A helical membrane pass occupies residues 804–824 (IIIFQVVFLGLLAGLVVLFYF). The Lumenal portion of the chain corresponds to 825 to 855 (YPVRCEWCEFLTCIPFTDKFCEKYELDAQLH).

This sequence belongs to the peptidase S54 family. As to quaternary structure, homodimer, or homooligomer. Interacts with TGFA and HBEGF. Interacts with EGF; may retain EGF in the endoplasmic reticulum and regulates its degradation through the endoplasmic reticulum-associated degradation (ERAD). Interacts (via cytoplasmic N-terminus) with FRMD8/iTAP; this interaction leads to mutual protein stabilization. Interacts with ADAM17/TACE.

It is found in the endoplasmic reticulum membrane. Its subcellular location is the golgi apparatus membrane. Functionally, regulates ADAM17 protease, a sheddase of the epidermal growth factor (EGF) receptor ligands and TNF, thereby plays a role in sleep, cell survival, proliferation, migration and inflammation. Does not exhibit any protease activity on its own. The protein is Inactive rhomboid protein 1 (RHBDF1) of Papio anubis (Olive baboon).